Reading from the N-terminus, the 106-residue chain is Large ribosomal subunit protein eL36 (106 aa).

Basic and acidic residues predominate over residues 75–93 (VRQEKVGHSQESKEEERGD). The tract at residues 75 to 106 (VRQEKVGHSQESKEEERGDVQCSPPDEGWWWY) is disordered.

This sequence belongs to the eukaryotic ribosomal protein eL36 family.

In Daucus carota (Wild carrot), this protein is Large ribosomal subunit protein eL36 (RPL36).